The chain runs to 125 residues: Fluoride-specific ion channel FluC (125 aa).

Helical transmembrane passes span 7–27 (FFIVGAGGFVGSVMRYLMAVV), 36–56 (GFPYATLAVNVLGSFMIGFLS), 63–83 (PYGRLFVMVGVLGGFTTFSTF), and 96–116 (FIFASLNVLLNVLLCLVGVFC). Residues Gly75 and Thr78 each contribute to the Na(+) site.

Belongs to the fluoride channel Fluc/FEX (TC 1.A.43) family.

It is found in the cell inner membrane. It carries out the reaction fluoride(in) = fluoride(out). With respect to regulation, na(+) is not transported, but it plays an essential structural role and its presence is essential for fluoride channel function. Fluoride-specific ion channel. Important for reducing fluoride concentration in the cell, thus reducing its toxicity. The protein is Fluoride-specific ion channel FluC of Elusimicrobium minutum (strain Pei191).